We begin with the raw amino-acid sequence, 231 residues long: Androgen-dependent TFPI-regulating protein (231 aa).

The Cytoplasmic portion of the chain corresponds to 1 to 7; sequence MTRTTTC. The chain crosses the membrane as a helical span at residues 8–28; it reads VYHFLVWNWYIFLNYYIPLIG. Residues 29-45 lie on the Extracellular side of the membrane; that stretch reads KDDEKLKEFHDGGRSKY. The helical transmembrane segment at 46–66 threads the bilayer; it reads LTLLNLLLQAIFFGVACLDDV. Over 67-85 the chain is Cytoplasmic; it reads LKRIIGRKDIKFITSTRDL. The helical transmembrane segment at 86 to 106 threads the bilayer; it reads LFSTLVFPISTFIFLVFWTLF. Topologically, residues 107 to 123 are extracellular; sequence YYDRSLIYPKGLDDYFP. The chain crosses the membrane as a helical span at residues 124–144; sequence AWLNHAMHTYILLFVLVETIL. The Cytoplasmic segment spans residues 145 to 154; that stretch reads RPHHYPSKKL. Residues 155–172 traverse the membrane as a helical segment; it reads GLALLGACNLAYITRVLW. The Extracellular segment spans residues 173–190; sequence RYSQTGNWVYPVFASLNP. The chain crosses the membrane as a helical span at residues 191–211; sequence LGIIIFFLVCYILNASIYLVG. Over 212–231 the chain is Cytoplasmic; the sequence is EKINHWKWGATVKPLMKKKK.

This sequence belongs to the AIG1 family. As to expression, highly expressed in flank organs and weakly in testis and earlobes.

It localises to the cell membrane. The enzyme catalyses 9-hexadecanoyloxy-octadecanoate + H2O = 9-hydroxy-octadecanoate + hexadecanoate + H(+). It catalyses the reaction 12-hexadecanoyloxy-octadecanoate + H2O = 12-hydroxyoctadecanoate + hexadecanoate + H(+). It carries out the reaction 9-(9Z-hexadecenoyloxy)-octadecanoate + H2O = (9Z)-hexadecenoate + 9-hydroxy-octadecanoate + H(+). The catalysed reaction is 12-(9Z-hexadecenoyloxy)-octadecanoate + H2O = 12-hydroxyoctadecanoate + (9Z)-hexadecenoate + H(+). The enzyme catalyses 13-(9Z-hexadecenoyloxy)-octadecanoate + H2O = 13-hydroxy-octadecanoate + (9Z)-hexadecenoate + H(+). It catalyses the reaction 9-octadecanoyloxy-octadecanoate + H2O = 9-hydroxy-octadecanoate + octadecanoate + H(+). It carries out the reaction 12-octadecanoyloxy-octadecanoate + H2O = 12-hydroxyoctadecanoate + octadecanoate + H(+). The catalysed reaction is 13-octadecanoyloxy-octadecanoate + H2O = 13-hydroxy-octadecanoate + octadecanoate + H(+). The enzyme catalyses 9-(9Z-octadecenoyloxy)-octadecanoate + H2O = 9-hydroxy-octadecanoate + (9Z)-octadecenoate + H(+). It catalyses the reaction 12-(9Z-octadecenoyloxy)-octadecanoate + H2O = 12-hydroxyoctadecanoate + (9Z)-octadecenoate + H(+). It carries out the reaction 13-(9Z-octadecenoyloxy)-octadecanoate + H2O = 13-hydroxy-octadecanoate + (9Z)-octadecenoate + H(+). The catalysed reaction is 5-(9Z-octadecenoyloxy)-octadecanoate + H2O = 5-hydroxy-octadecanoate + (9Z)-octadecenoate + H(+). Hydrolyzes bioactive fatty-acid esters of hydroxy-fatty acids (FAHFAs), but not other major classes of lipids. Shows a preference for FAHFAs with branching distal from the carboxylate head group of the lipids. Regulates the expression and the cell-associated anticoagulant activity of the inhibitor TFPI in endothelial cells (in vitro). The sequence is that of Androgen-dependent TFPI-regulating protein (ADTRP) from Mesocricetus auratus (Golden hamster).